Reading from the N-terminus, the 70-residue chain is Large ribosomal subunit protein bL31 (70 aa).

Zn(2+)-binding residues include Cys-16, Cys-18, Cys-37, and Cys-40.

Belongs to the bacterial ribosomal protein bL31 family. Type A subfamily. In terms of assembly, part of the 50S ribosomal subunit. It depends on Zn(2+) as a cofactor.

Its function is as follows. Binds the 23S rRNA. The protein is Large ribosomal subunit protein bL31 of Shewanella frigidimarina (strain NCIMB 400).